A 610-amino-acid polypeptide reads, in one-letter code: Elongation factor 4 (610 aa).

Residues 11–193 (EKIRNFSIIA…QIVEKVPAPT (183 aa)) enclose the tr-type G domain. GTP is bound by residues 23–28 (DHGKST) and 140–143 (NKID).

This sequence belongs to the TRAFAC class translation factor GTPase superfamily. Classic translation factor GTPase family. LepA subfamily.

It localises to the cell membrane. It carries out the reaction GTP + H2O = GDP + phosphate + H(+). Functionally, required for accurate and efficient protein synthesis under certain stress conditions. May act as a fidelity factor of the translation reaction, by catalyzing a one-codon backward translocation of tRNAs on improperly translocated ribosomes. Back-translocation proceeds from a post-translocation (POST) complex to a pre-translocation (PRE) complex, thus giving elongation factor G a second chance to translocate the tRNAs correctly. Binds to ribosomes in a GTP-dependent manner. The chain is Elongation factor 4 from Streptococcus pyogenes serotype M49 (strain NZ131).